The sequence spans 63 residues: Small ribosomal subunit protein bS21 (63 aa).

This sequence belongs to the bacterial ribosomal protein bS21 family.

The protein is Small ribosomal subunit protein bS21 of Phocaeicola vulgatus (strain ATCC 8482 / DSM 1447 / JCM 5826 / CCUG 4940 / NBRC 14291 / NCTC 11154) (Bacteroides vulgatus).